The sequence spans 674 residues: PTS system glucose-specific EIIBCA component (674 aa).

The PTS EIIB type-1 domain maps to 1–89; the sequence is MASKLTTTSQ…LKLDGMKHFA (89 aa). The active-site Phosphocysteine intermediate; for EIIB activity is the cysteine 28. A PTS EIIC type-1 domain is found at 117–476; it reads EFLSDTFRPI…DAERDEAKAQ (360 aa). Transmembrane regions (helical) follow at residues 126–146, 162–182, 193–213, 225–245, 260–280, 303–323, 344–364, 376–396, 409–429, and 442–462; these read ILWA…ADTF, YVFL…MVGA, WIGA…LGSA, VLND…GLYW, MVFV…FLLG, FILS…GLHW, PMGA…LIAL, LGGM…YGVL, GCLV…AFVF, and LGYT…VLFF. One can recognise a PTS EIIA type-1 domain in the interval 542-646; it reads DPIFAAGKLG…PLITPVVVSN (105 aa). Histidine 594 acts as the Tele-phosphohistidine intermediate; for EIIA activity in catalysis.

The protein localises to the cell membrane. The catalysed reaction is N(pros)-phospho-L-histidyl-[protein] + D-glucose(out) = D-glucose 6-phosphate(in) + L-histidyl-[protein]. The phosphoenolpyruvate-dependent sugar phosphotransferase system (sugar PTS), a major carbohydrate active transport system, catalyzes the phosphorylation of incoming sugar substrates concomitantly with their translocation across the cell membrane. This system is involved in glucose transport. This Corynebacterium glutamicum (Brevibacterium saccharolyticum) protein is PTS system glucose-specific EIIBCA component (ptsG).